Consider the following 675-residue polypeptide: Secretogranin-1 (675 aa).

An N-terminal signal peptide occupies residues 1-20; sequence MQRAMLLGLLGAAALAAVIS. A disulfide bridge links cysteine 36 with cysteine 57. Basic and acidic residues predominate over residues 64–90; the sequence is SGKEVKGEEKGENENSKFEVRLLRDPS. Disordered stretches follow at residues 64–507 and 528–555; these read SGKE…YPTT and NSDFEKKGNPDDSFLDDDGEDGNGVTMT. Phosphoserine is present on residues serine 93, serine 99, serine 100, serine 129, and serine 147. Serine 93 is a glycosylation site (O-linked (Xyl...) (chondroitin sulfate) serine). Composition is skewed to basic and acidic residues over residues 148–161 and 168–248; these read KEAKIRHSEERGGK and GKIY…KPQE. Phosphoserine is present on serine 190. Residue serine 236 is glycosylated (O-linked (Xyl...) (chondroitin sulfate) serine). Acidic residues predominate over residues 250-269; it reads PDQDQSEEESEEGEEGEEGA. Residues serine 255, serine 259, serine 291, serine 309, and serine 333 each carry the phosphoserine modification. Basic and acidic residues predominate over residues 292–311; it reads YEGRRPLSEERKHAAGESKD. Residue tyrosine 339 is modified to Sulfotyrosine. Basic and acidic residues-rich tracts occupy residues 361–410 and 429–452; these read GSEE…EGAK and SRQEKRLLDEGHDPVHESPVDTAK. Residues serine 362, serine 372, serine 375, and serine 397 each carry the phosphoserine modification. Residue tyrosine 469 is modified to Sulfotyrosine. Phosphoserine is present on residues serine 490, serine 529, and serine 540. Tyrosine 563 bears the Sulfotyrosine mark. A disordered region spans residues 620–646; it reads DFYDSEEQMGPHQEAEDEKDRADQRVL. Tyrosine 622 bears the Sulfotyrosine; partial mark. Position 624 is a phosphoserine (serine 624). Basic and acidic residues predominate over residues 637–646; that stretch reads EKDRADQRVL. Position 674 is an arginine amide; in CCB peptide short form (arginine 674).

This sequence belongs to the chromogranin/secretogranin protein family. Interacts with ITPR1 in the secretory granules. Post-translationally, extensively processed in glucagonoma tissue by limited proteolysis at conserved basic residues. Alternative processing are seen in different tissues. The proglucagon-converting enzymes present in transformed alpha-cells are likely candidates to be involved in tissue-specific processing. As to expression, expressed in the brain, adrenal medulla and anterior pituitary. In the brain, localized to the hippocampal formation, the endocrine hypothalamus, the olfactory system, and in anatomically distinct structures in the pons-medulla.

It localises to the secreted. In terms of biological role, secretogranin-1 is a neuroendocrine secretory granule protein, which may be the precursor for other biologically active peptides. In Rattus norvegicus (Rat), this protein is Secretogranin-1 (Chgb).